Reading from the N-terminus, the 266-residue chain is MTHPNTATPPFIAVVPARLASTRLPNKPLADIGGKPMVVRVAERARESGAQQVLVASDAQAVLDAARDHGFEAVLTRADHPSGTDRLAEVAAQFGWSDDTIVVNVQGDEPLIDPALVCGVASHLAASHGCAIATAAHPITDPAEIFNPNVVKVVLDARGVALYFSRAPIPWARDAYQPHWPNVASMPAPHAPAVVHRHIGLYAYRAQFLRTYPSLAISPIEQVEALEQLRAMWHGERIAVLVTHEVPLPGVDTPADLARVQALFGS.

This sequence belongs to the KdsB family.

It is found in the cytoplasm. The enzyme catalyses 3-deoxy-alpha-D-manno-oct-2-ulosonate + CTP = CMP-3-deoxy-beta-D-manno-octulosonate + diphosphate. It participates in nucleotide-sugar biosynthesis; CMP-3-deoxy-D-manno-octulosonate biosynthesis; CMP-3-deoxy-D-manno-octulosonate from 3-deoxy-D-manno-octulosonate and CTP: step 1/1. The protein operates within bacterial outer membrane biogenesis; lipopolysaccharide biosynthesis. Functionally, activates KDO (a required 8-carbon sugar) for incorporation into bacterial lipopolysaccharide in Gram-negative bacteria. This Paraburkholderia phytofirmans (strain DSM 17436 / LMG 22146 / PsJN) (Burkholderia phytofirmans) protein is 3-deoxy-manno-octulosonate cytidylyltransferase 1.